A 596-amino-acid polypeptide reads, in one-letter code: Arginine--tRNA ligase (596 aa).

The 'HIGH' region signature appears at 123-133 (PNTNKPLHLGH).

This sequence belongs to the class-I aminoacyl-tRNA synthetase family. As to quaternary structure, monomer.

It localises to the cytoplasm. The catalysed reaction is tRNA(Arg) + L-arginine + ATP = L-arginyl-tRNA(Arg) + AMP + diphosphate. This Amoebophilus asiaticus (strain 5a2) protein is Arginine--tRNA ligase.